We begin with the raw amino-acid sequence, 738 residues long: Polyribonucleotide nucleotidyltransferase (738 aa).

2 residues coordinate Mg(2+): D528 and D534. Residues 594 to 653 (PRVVRVKIPVQKIGELIGPKGKVINSIQDETGAEISIEDDGTVYIGSSQADSSEKAVAMV) enclose the KH domain. The 73-residue stretch at 665 to 737 (GSQFLGTVVK…DRGKLCLVAV (73 aa)) folds into the S1 motif domain.

Belongs to the polyribonucleotide nucleotidyltransferase family. The cofactor is Mg(2+).

The protein localises to the cytoplasm. It catalyses the reaction RNA(n+1) + phosphate = RNA(n) + a ribonucleoside 5'-diphosphate. In terms of biological role, involved in mRNA degradation. Catalyzes the phosphorolysis of single-stranded polyribonucleotides processively in the 3'- to 5'-direction. This chain is Polyribonucleotide nucleotidyltransferase, found in Tropheryma whipplei (strain Twist) (Whipple's bacillus).